Here is a 187-residue protein sequence, read N- to C-terminus: Elongation factor P (187 aa).

This sequence belongs to the elongation factor P family.

Its subcellular location is the cytoplasm. Its pathway is protein biosynthesis; polypeptide chain elongation. In terms of biological role, involved in peptide bond synthesis. Stimulates efficient translation and peptide-bond synthesis on native or reconstituted 70S ribosomes in vitro. Probably functions indirectly by altering the affinity of the ribosome for aminoacyl-tRNA, thus increasing their reactivity as acceptors for peptidyl transferase. The protein is Elongation factor P of Azobacteroides pseudotrichonymphae genomovar. CFP2.